A 252-amino-acid polypeptide reads, in one-letter code: tRNA uridine(34) hydroxylase (252 aa).

Residues 129–223 (QGRPVVMLDT…YFEETGGKGF (95 aa)) enclose the Rhodanese domain. Cys183 serves as the catalytic Cysteine persulfide intermediate.

It belongs to the TrhO family.

The enzyme catalyses uridine(34) in tRNA + AH2 + O2 = 5-hydroxyuridine(34) in tRNA + A + H2O. In terms of biological role, catalyzes oxygen-dependent 5-hydroxyuridine (ho5U) modification at position 34 in tRNAs. The chain is tRNA uridine(34) hydroxylase from Bordetella petrii (strain ATCC BAA-461 / DSM 12804 / CCUG 43448).